A 264-amino-acid chain; its full sequence is Thymidylate synthase (264 aa).

Residue R21 coordinates dUMP. H51 is a (6R)-5,10-methylene-5,6,7,8-tetrahydrofolate binding site. A dUMP-binding site is contributed by 126 to 127 (RR). C146 (nucleophile) is an active-site residue. Residues 166 to 169 (RSGD), N177, and 207 to 209 (HLY) contribute to the dUMP site. Residue D169 coordinates (6R)-5,10-methylene-5,6,7,8-tetrahydrofolate. Residue A263 participates in (6R)-5,10-methylene-5,6,7,8-tetrahydrofolate binding.

The protein belongs to the thymidylate synthase family. Bacterial-type ThyA subfamily. In terms of assembly, homodimer.

The protein localises to the cytoplasm. The enzyme catalyses dUMP + (6R)-5,10-methylene-5,6,7,8-tetrahydrofolate = 7,8-dihydrofolate + dTMP. The protein operates within pyrimidine metabolism; dTTP biosynthesis. Catalyzes the reductive methylation of 2'-deoxyuridine-5'-monophosphate (dUMP) to 2'-deoxythymidine-5'-monophosphate (dTMP) while utilizing 5,10-methylenetetrahydrofolate (mTHF) as the methyl donor and reductant in the reaction, yielding dihydrofolate (DHF) as a by-product. This enzymatic reaction provides an intracellular de novo source of dTMP, an essential precursor for DNA biosynthesis. The polypeptide is Thymidylate synthase (Xanthomonas axonopodis pv. citri (strain 306)).